Here is a 32-residue protein sequence, read N- to C-terminus: ilv operon leader peptide (32 aa).

This is ilv operon leader peptide (ilvL) from Yersinia pestis.